The sequence spans 125 residues: Large ribosomal subunit protein bL12 (125 aa).

It belongs to the bacterial ribosomal protein bL12 family. Homodimer. Part of the ribosomal stalk of the 50S ribosomal subunit. Forms a multimeric L10(L12)X complex, where L10 forms an elongated spine to which 2 to 4 L12 dimers bind in a sequential fashion. Binds GTP-bound translation factors.

Forms part of the ribosomal stalk which helps the ribosome interact with GTP-bound translation factors. Is thus essential for accurate translation. This chain is Large ribosomal subunit protein bL12, found in Rickettsia africae (strain ESF-5).